The chain runs to 158 residues: Regulator of sigma D (158 aa).

The protein belongs to the Rsd/AlgQ family. In terms of assembly, interacts with RpoD.

It is found in the cytoplasm. Binds RpoD and negatively regulates RpoD-mediated transcription activation by preventing the interaction between the primary sigma factor RpoD with the catalytic core of the RNA polymerase and with promoter DNA. May be involved in replacement of the RNA polymerase sigma subunit from RpoD to RpoS during the transition from exponential growth to the stationary phase. The chain is Regulator of sigma D from Shigella boydii serotype 4 (strain Sb227).